Consider the following 104-residue polypeptide: L-rhamnose mutarotase (104 aa).

Substrate is bound at residue Tyr-18. The active-site Proton donor is His-22. Residues Tyr-41 and 76-77 contribute to the substrate site; that span reads WW.

The protein belongs to the rhamnose mutarotase family. In terms of assembly, homodimer.

It localises to the cytoplasm. It carries out the reaction alpha-L-rhamnose = beta-L-rhamnose. The protein operates within carbohydrate metabolism; L-rhamnose metabolism. Its function is as follows. Involved in the anomeric conversion of L-rhamnose. The protein is L-rhamnose mutarotase of Jannaschia sp. (strain CCS1).